Here is a 254-residue protein sequence, read N- to C-terminus: Attacin-A (254 aa).

An N-terminal signal peptide occupies residues 1 to 18 (MFTYKLILGLVLVVSASA). The propeptide occupies 19–62 (RYLVFEDLEGESYLVPNQAEDEQVLEGEPFYENAVQLASPRVRR).

The protein belongs to the attacin/sarcotoxin-2 family.

The protein localises to the secreted. Functionally, hemolymph antibacterial protein. In Trichoplusia ni (Cabbage looper), this protein is Attacin-A.